Consider the following 265-residue polypeptide: MSSTLSSHNVIALKASNLHLQLGGKTLLDNVDLEIRSGQITALLGPNGAGKSSLLKVLNGEITPNSGSIEIFSSPKDHWPSELLAKHMGILPQHSTLSFSFLAHEVAELGAMPLAISNHQAQQLAAKNMVKVGVDHLANRLYPTLSGGEKQRVHFARVLTQLSHSGEQCILMLDEPTSALDLAHQHHTLEIAQALSQQGAAVIIVIHDLNLAAQYADRLIILNQGKIQADGTPWQVLTPTAVENVYGWPVQVIAHPEHNYPVILA.

The region spanning 13-249 is the ABC transporter domain; that stretch reads LKASNLHLQL…TAVENVYGWP (237 aa). 45 to 52 lines the ATP pocket; that stretch reads GPNGAGKS.

The protein belongs to the ABC transporter superfamily. Heme (hemin) importer (TC 3.A.1.14.5) family. The complex is composed of two ATP-binding proteins (HmuV), two transmembrane proteins (HmuU) and a solute-binding protein (HmuT).

The protein localises to the cell inner membrane. Part of the ABC transporter complex HmuTUV involved in hemin import. Responsible for energy coupling to the transport system. The sequence is that of Hemin import ATP-binding protein HmuV from Photobacterium damsela subsp. piscicida (Pasteurella piscicida).